Here is a 415-residue protein sequence, read N- to C-terminus: MPQTLTEKILSRASGKSVAPGDVVEVKVDIAAFHDLTGYHVIEVMEKAGMLKVFDKQKIVIAFDHLAPPPDVRSAEIQTQIRKFVKELKIPNFHDINVGILHQILLEKYANPGYVIVAADSHTTTSGAVGAFAQGLGASDVAAAVITGKTWVMVPQSFKIMLEGKPGKWINGKDVALKILGDFKADYFNGMSIEIFVREPSAFPMDFRATVSNMGIEMNADALMFVPDEETVNYIKTNRGYEPNIVRPDEGAKYVDEYTIDLGKLEPLVAAPHSVDNVKTVNEVEGLDVDQVFIGSCTNGRISDFEIAAKILKGKRVKSRCIAIPASYDLFKKAMELGYIETLVNAGCIVTYGTCGPCLGGHFGVAGPGETIVSTSSRNFKGRMGSNDSKVYLAGPAVAAASALQGKITDPRRFS.

The [4Fe-4S] cluster site is built by C297, C355, and C358.

It belongs to the aconitase/IPM isomerase family. LeuC type 2 subfamily. In terms of assembly, heterodimer of LeuC and LeuD. [4Fe-4S] cluster is required as a cofactor.

The catalysed reaction is (2R,3S)-3-isopropylmalate = (2S)-2-isopropylmalate. Its pathway is amino-acid biosynthesis; L-leucine biosynthesis; L-leucine from 3-methyl-2-oxobutanoate: step 2/4. Its function is as follows. Catalyzes the isomerization between 2-isopropylmalate and 3-isopropylmalate, via the formation of 2-isopropylmaleate. The chain is 3-isopropylmalate dehydratase large subunit from Sulfurisphaera tokodaii (strain DSM 16993 / JCM 10545 / NBRC 100140 / 7) (Sulfolobus tokodaii).